Here is a 93-residue protein sequence, read N- to C-terminus: uncharacterized protein (93 aa).

This is an uncharacterized protein from Homo sapiens (Human).